The primary structure comprises 673 residues: Auxin response factor 9 (673 aa).

A DNA-binding region (TF-B3) is located at residues 126–228; that stretch reads FCKTLTASDT…ELRVGVRRLM (103 aa). Disordered stretches follow at residues 356–386 and 514–545; these read ELEP…PSVV and DSDQ…QSRQ. Polar residues predominate over residues 516–545; sequence DQISQPSNGNKSDAPGTSSERSPLESQSRQ. A PB1 domain is found at 547 to 639; sequence RSCTKVIMQG…EEAKLLAPKS (93 aa).

It belongs to the ARF family. In terms of assembly, homodimers and heterodimers. In terms of tissue distribution, expressed in roots, culms, leaves and young panicles.

Its subcellular location is the nucleus. Its function is as follows. Auxin response factors (ARFs) are transcriptional factors that bind specifically to the DNA sequence 5'-TGTCTC-3' found in the auxin-responsive promoter elements (AuxREs). This is Auxin response factor 9 (ARF9) from Oryza sativa subsp. japonica (Rice).